Consider the following 539-residue polypeptide: Protein Wnt-4 (539 aa).

The N-terminal stretch at 1-21 (MPSPTGVFVLMILTHLSFGLG) is a signal peptide. The disordered stretch occupies residues 34–77 (QNGDLDSSNPAIHHQQHQQHQQHQQHQQHQSNHNLNNGNMNSTI). Residues 51-74 (QQHQQHQQHQQHQSNHNLNNGNMN) show a composition bias toward low complexity. N-linked (GlcNAc...) asparagine glycosylation is found at Asn-74 and Asn-284. 5 disulfide bridges follow: Cys-274/Cys-285, Cys-322/Cys-330, Cys-332/Cys-349, Cys-397/Cys-411, and Cys-399/Cys-406. A lipid anchor (O-palmitoleoyl serine; by PORCN) is attached at Ser-403. The N-linked (GlcNAc...) asparagine glycan is linked to Asn-419. The segment at 436-463 (APNQRSMRQVSSSRMKKPKQRRKKPQQS) is disordered. Residues 439–448 (QRSMRQVSSS) show a composition bias toward low complexity. Positions 449–460 (RMKKPKQRRKKP) are enriched in basic residues. Disulfide bonds link Cys-478–Cys-497, Cys-486–Cys-492, Cys-496–Cys-538, Cys-512–Cys-529, Cys-514–Cys-526, and Cys-521–Cys-522.

Belongs to the Wnt family. Palmitoleoylated by porcupine. The lipid group functions as a sorting signal, targeting the ligand to polarized vesicles that transport Wnt4 to unique sites at the cell surface. Depalmitoleoylated by notum, leading to inhibit Wnt signaling pathway.

It is found in the secreted. The protein resides in the extracellular space. Its subcellular location is the extracellular matrix. Its function is as follows. Binds as a ligand to a family of frizzled seven-transmembrane receptors and acts through a cascade of genes on the nucleus. Acts downstream of homeotic complex genes in the visceral mesoderm and is required for embryonic segmentation. Also required for cell movement and FAK regulation during ovarian morphogenesis. In Drosophila melanogaster (Fruit fly), this protein is Protein Wnt-4 (Wnt4).